The primary structure comprises 187 residues: Phosphatidylethanolamine-binding protein 2 (187 aa).

A phosphoserine mark is found at S13, S52, and S54.

The protein belongs to the phosphatidylethanolamine-binding protein family. Testis specific.

It localises to the cytoplasm. May bind to phospholipids. May act as serine protease inhibitor. In Mus musculus (Mouse), this protein is Phosphatidylethanolamine-binding protein 2 (Pbp2).